We begin with the raw amino-acid sequence, 557 residues long: Elongator complex protein 3 (557 aa).

Positions 91 to 381 (RTASGIAVVA…YRVQRDIPMP (291 aa)) constitute a Radical SAM core domain. Positions 108, 118, and 121 each coordinate [4Fe-4S] cluster. Acetyl-CoA is bound at residue Lys-173. The N-acetyltransferase domain maps to 405–557 (TTCRDVRTRE…LDGPYMSKRI (153 aa)). A Glycyl lysine isopeptide (Lys-Gly) (interchain with G-Cter in ubiquitin) cross-link involves residue Lys-453. Acetyl-CoA contacts are provided by residues 485–488 (ELHV), 508–510 (FGT), and Tyr-541.

It belongs to the ELP3 family. In terms of assembly, component of the elongator complex which consists of ELP1/IKI3, ELP2, ELP3, ELP4, ELP5/IKI1 and ELP6. The elongator complex is composed of two copies of the Elp123 subcomplex (composed of ELP1/IKI3, ELP2 and ELP3) and two copies of the Elp456 subcomplex (composed of ELP4, ELP5/IKI1 and ELP6). The Elp123 subcomplex forms a two-lobed scaffold, which binds the Elp456 subcomplex asymmetrically. In each lobe, ELP2 is tightly sandwiched between ELP1/IKI3 and ELP3. The Elp123 subcomplex binds tRNA through ELP1/IKI3 and ELP3 and can bind 2 tRNAs simultaneously. tRNA-binding induces conformational rearrangements which precisely position the targeted anticodon base in the active site. ELP3 interacts with KTI11/DPH3. ELP3 interacts with KTI12. The Elp456 subcomplex binds tRNA and has ATPase activity. [4Fe-4S] cluster is required as a cofactor.

The protein resides in the cytoplasm. Its subcellular location is the nucleus. It catalyses the reaction uridine(34) in tRNA + acetyl-CoA + S-adenosyl-L-methionine + H2O = 5-(carboxymethyl)uridine(34) in tRNA + 5'-deoxyadenosine + L-methionine + CoA + 2 H(+). It participates in tRNA modification; 5-methoxycarbonylmethyl-2-thiouridine-tRNA biosynthesis. In terms of biological role, catalytic tRNA acetyltransferase subunit of the elongator complex which is required for multiple tRNA modifications, including mcm5U (5-methoxycarbonylmethyl uridine), mcm5s2U (5-methoxycarbonylmethyl-2-thiouridine), and ncm5U (5-carbamoylmethyl uridine). In the elongator complex, acts as a tRNA uridine(34) acetyltransferase, which mediates formation of carboxymethyluridine in the wobble base at position 34 in tRNAs. The complex functions as a gamma-toxin target (TOT); disruption of the complex confers resistance to Kluyveromyces lactis toxin zymocin (pGKL1 killer toxin). May also be involved in sensitivity to Pichia inositovora toxin. Independently, ELP3 may be involved in polarized exocytosis. This chain is Elongator complex protein 3, found in Saccharomyces cerevisiae (strain ATCC 204508 / S288c) (Baker's yeast).